A 51-amino-acid polypeptide reads, in one-letter code: Large ribosomal subunit protein bL33 (51 aa).

It belongs to the bacterial ribosomal protein bL33 family.

In Psychrobacter arcticus (strain DSM 17307 / VKM B-2377 / 273-4), this protein is Large ribosomal subunit protein bL33.